We begin with the raw amino-acid sequence, 258 residues long: Small ribosomal subunit protein mS23 (258 aa).

The protein belongs to the mitochondrion-specific ribosomal protein mS23 family. Component of the mitochondrial small ribosomal subunit.

The protein resides in the mitochondrion. The chain is Small ribosomal subunit protein mS23 (rsm25) from Aspergillus fumigatus (strain ATCC MYA-4609 / CBS 101355 / FGSC A1100 / Af293) (Neosartorya fumigata).